The following is a 331-amino-acid chain: Probable tRNA-dihydrouridine synthase (331 aa).

Residues 17-19 (PMS) and glutamine 72 each bind FMN. Cysteine 102 serves as the catalytic Proton donor. FMN contacts are provided by residues lysine 141, 202–204 (NGD), and 226–227 (GR).

The protein belongs to the Dus family. Requires FMN as cofactor.

The enzyme catalyses a 5,6-dihydrouridine in tRNA + NAD(+) = a uridine in tRNA + NADH + H(+). The catalysed reaction is a 5,6-dihydrouridine in tRNA + NADP(+) = a uridine in tRNA + NADPH + H(+). Functionally, catalyzes the synthesis of 5,6-dihydrouridine (D), a modified base found in the D-loop of most tRNAs, via the reduction of the C5-C6 double bond in target uridines. The chain is Probable tRNA-dihydrouridine synthase (dus) from Rickettsia conorii (strain ATCC VR-613 / Malish 7).